The primary structure comprises 315 residues: uncharacterized protein (315 aa).

Belongs to the carbohydrate kinase PfkB family.

This is an uncharacterized protein from Escherichia coli (strain K12).